The chain runs to 413 residues: Serine hydroxymethyltransferase (413 aa).

Residues leucine 119 and 123–125 (GHL) contribute to the (6S)-5,6,7,8-tetrahydrofolate site. Lysine 228 bears the N6-(pyridoxal phosphate)lysine mark. Glutamate 243 provides a ligand contact to (6S)-5,6,7,8-tetrahydrofolate.

Belongs to the SHMT family. As to quaternary structure, homodimer. It depends on pyridoxal 5'-phosphate as a cofactor.

Its subcellular location is the cytoplasm. The catalysed reaction is (6R)-5,10-methylene-5,6,7,8-tetrahydrofolate + glycine + H2O = (6S)-5,6,7,8-tetrahydrofolate + L-serine. It participates in one-carbon metabolism; tetrahydrofolate interconversion. It functions in the pathway amino-acid biosynthesis; glycine biosynthesis; glycine from L-serine: step 1/1. Functionally, catalyzes the reversible interconversion of serine and glycine with tetrahydrofolate (THF) serving as the one-carbon carrier. This reaction serves as the major source of one-carbon groups required for the biosynthesis of purines, thymidylate, methionine, and other important biomolecules. Also exhibits THF-independent aldolase activity toward beta-hydroxyamino acids, producing glycine and aldehydes, via a retro-aldol mechanism. This chain is Serine hydroxymethyltransferase, found in Thermoanaerobacter pseudethanolicus (strain ATCC 33223 / 39E) (Clostridium thermohydrosulfuricum).